A 97-amino-acid chain; its full sequence is Scorpine-like peptide Ev37 (97 aa).

The N-terminal stretch at 1–19 (MNSKLTVIVLLALITIASC) is a signal peptide. One can recognise a BetaSPN-type CS-alpha/beta domain in the interval 55–95 (QNLCAFNVDTVGMCDADCKRQGKAKGVCHGTKCKCDVELSY). 3 disulfide bridges follow: Cys58–Cys82, Cys68–Cys87, and Cys72–Cys89.

It belongs to the long chain scorpion toxin family. Class 3 subfamily. Expressed by the venom gland.

It localises to the secreted. Functionally, selectively inhibits Kv1.3/KCNA3 channel (IC(50)=0.95 uM). Both N-terminal and C-terminal domains are likely involved in the interaction with Kv1.3/KCNA3, since neither its N-terminal domain (1-36) nor its C-terminal domain (37-78) block Kv1.3/KCNA3 channel. This Euscorpiops validus (Scorpion) protein is Scorpine-like peptide Ev37.